The following is a 463-amino-acid chain: Abscisic acid 8'-hydroxylase 3 (463 aa).

The chain crosses the membrane as a helical span at residues 6–26 (LFLTLSAAALFLCLLRFIAGV). Residue cysteine 411 coordinates heme.

This sequence belongs to the cytochrome P450 family. Heme is required as a cofactor. As to expression, mainly expressed in flower buds, flowers, rosette leaves and roots. Lower expression in mature siliques and inflorescence stems. Not expressed in dry seeds.

The protein localises to the membrane. It carries out the reaction 2-cis-(+)-abscisate + reduced [NADPH--hemoprotein reductase] + O2 = (+)-8'-hydroxyabscisate + oxidized [NADPH--hemoprotein reductase] + H2O + H(+). The protein operates within plant hormone degradation; abscisic acid degradation. Its activity is regulated as follows. Inhibited by tetcyclcis, but not by metyrapone. Its function is as follows. Involved in the oxidative degradation of abscisic acid, but not in the isomerization of the produced 8'-hydroxyabscisic acid (8'-OH-ABA) to (-)-phaseic acid (PA). Involved in the control of postgermination growth. This chain is Abscisic acid 8'-hydroxylase 3 (CYP707A3), found in Arabidopsis thaliana (Mouse-ear cress).